The sequence spans 543 residues: Probable ubiquitin-conjugating enzyme E2 26 (543 aa).

Positions 1–21 (MEPDVVEIPPPPLIASGSRTR) are disordered. The UBC core domain occupies 271–431 (NWVKKVQADW…VFLLSLKTMV (161 aa)). Cysteine 357 functions as the Glycyl thioester intermediate in the catalytic mechanism. The disordered stretch occupies residues 514-543 (LAEKPEPPMSNANTENQSKKKTRKRSRSSR). Over residues 532-543 (KKKTRKRSRSSR) the composition is skewed to basic residues.

Belongs to the ubiquitin-conjugating enzyme family.

It catalyses the reaction S-ubiquitinyl-[E1 ubiquitin-activating enzyme]-L-cysteine + [E2 ubiquitin-conjugating enzyme]-L-cysteine = [E1 ubiquitin-activating enzyme]-L-cysteine + S-ubiquitinyl-[E2 ubiquitin-conjugating enzyme]-L-cysteine.. It participates in protein modification; protein ubiquitination. Its function is as follows. Accepts the ubiquitin from the E1 complex and catalyzes its covalent attachment to other proteins. The sequence is that of Probable ubiquitin-conjugating enzyme E2 26 (UBC26) from Arabidopsis thaliana (Mouse-ear cress).